The primary structure comprises 463 residues: MNLATIKVTLPELIGRYQSQADFISIRLEQSEGTQISLRSDQVETLSEGIAMGGQVRVCHQGGWGFASFNRWEQLRQRLEEAIAAARLIGDDETLLAPIDPVQQTFINPLTGKDPRQISLADKKALCDHYNDLLRGTSDKITTTHVRYSDSQQTVLLATSEGTLLEQCWWDLEMRFAATAKDGNGVQVGRETTGSRRGYGDLENLDQVVQGAAQRAVKALTLPTVQGKTYPVVIDPILTGLFVHEAFGHLSEADMLYENPDFLEVMSLGRRFGPPELQIFDGAAPPGHRGSYGFDDEGVPASTTQLIKDGELVGRLHSRETAGKLGEKPTGNARCLNYHYPPIVRMTNTWIGRGETPVANLLDGIEEGIYAQNWLGGMTNGEMFTFSAGEAWMIRHGQLAEPVKDVTLSGNVFKTLANIEAIADDFYWDESGGCGKGGQNGLAVGCGGPSLRIRDVVVGGDAA.

This sequence belongs to the peptidase U62 family.

Functionally, probable metalloprotease. The polypeptide is Metalloprotease slr0863 (Synechocystis sp. (strain ATCC 27184 / PCC 6803 / Kazusa)).